The primary structure comprises 252 residues: 5'-nucleotidase SurE (252 aa).

A divalent metal cation is bound by residues Asp8, Asp9, Ser39, and Asn95.

Belongs to the SurE nucleotidase family. A divalent metal cation is required as a cofactor.

Its subcellular location is the cytoplasm. The enzyme catalyses a ribonucleoside 5'-phosphate + H2O = a ribonucleoside + phosphate. Nucleotidase that shows phosphatase activity on nucleoside 5'-monophosphates. In Clostridium botulinum (strain 657 / Type Ba4), this protein is 5'-nucleotidase SurE.